The chain runs to 566 residues: Repressible alkaline phosphatase (566 aa).

Residues 1-11 (MMTHTLPSEQT) show a composition bias toward polar residues. The disordered stretch occupies residues 1–27 (MMTHTLPSEQTRLVPGSDSSSRPKKRR). The Cytoplasmic portion of the chain corresponds to 1–33 (MMTHTLPSEQTRLVPGSDSSSRPKKRRISKRSK). A helical membrane pass occupies residues 34–59 (IIVSTVVCIGLLLVLVQLAFPSSFAL). D75 provides a ligand contact to Mg(2+). D75 contacts Zn(2+). S123 functions as the Phosphoserine intermediate in the catalytic mechanism. S123 carries the post-translational modification Phosphoserine. 2 residues coordinate Mg(2+): D174 and T176. The N-linked (GlcNAc...) asparagine glycan is linked to N268. Residue E325 coordinates Mg(2+). The Zn(2+) site is built by D330, H334, D373, and H374. N401 is a glycosylation site (N-linked (GlcNAc...) asparagine). Zn(2+) is bound at residue H484.

This sequence belongs to the alkaline phosphatase family. It depends on Mg(2+) as a cofactor. Requires Zn(2+) as cofactor.

It is found in the vacuole membrane. It localises to the cytoplasm. The enzyme catalyses a phosphate monoester + H2O = an alcohol + phosphate. The catalysed reaction is (2E,6E)-farnesyl diphosphate + H2O = (2E,6E)-farnesol + diphosphate. It carries out the reaction beta-D-fructose 2,6-bisphosphate + H2O = beta-D-fructose 2-phosphate + phosphate. Its function is as follows. Phosphatase with broad substrate specificity. A truncated (soluble) version of the protein is responsible for the production of (E,E)-farnesol from (E,E)-farnesyl diphosphate. Acts as a fructose-2,6-bisphosphate 6-phosphatase. The chain is Repressible alkaline phosphatase (PHO8) from Saccharomyces cerevisiae (strain ATCC 204508 / S288c) (Baker's yeast).